The primary structure comprises 98 residues: Protein translation factor SUI1 homolog (98 aa).

Belongs to the SUI1 family.

The protein is Protein translation factor SUI1 homolog of Thermococcus onnurineus (strain NA1).